Consider the following 347-residue polypeptide: Lipoyl synthase (347 aa).

7 residues coordinate [4Fe-4S] cluster: cysteine 55, cysteine 60, cysteine 66, cysteine 81, cysteine 85, cysteine 88, and serine 292. A Radical SAM core domain is found at 67 to 281; the sequence is WEDREATFLI…RDYGHDIGFA (215 aa).

The protein belongs to the radical SAM superfamily. Lipoyl synthase family. Requires [4Fe-4S] cluster as cofactor.

Its subcellular location is the cytoplasm. The enzyme catalyses [[Fe-S] cluster scaffold protein carrying a second [4Fe-4S](2+) cluster] + N(6)-octanoyl-L-lysyl-[protein] + 2 oxidized [2Fe-2S]-[ferredoxin] + 2 S-adenosyl-L-methionine + 4 H(+) = [[Fe-S] cluster scaffold protein] + N(6)-[(R)-dihydrolipoyl]-L-lysyl-[protein] + 4 Fe(3+) + 2 hydrogen sulfide + 2 5'-deoxyadenosine + 2 L-methionine + 2 reduced [2Fe-2S]-[ferredoxin]. It functions in the pathway protein modification; protein lipoylation via endogenous pathway; protein N(6)-(lipoyl)lysine from octanoyl-[acyl-carrier-protein]: step 2/2. In terms of biological role, catalyzes the radical-mediated insertion of two sulfur atoms into the C-6 and C-8 positions of the octanoyl moiety bound to the lipoyl domains of lipoate-dependent enzymes, thereby converting the octanoylated domains into lipoylated derivatives. This is Lipoyl synthase from Corynebacterium kroppenstedtii (strain DSM 44385 / JCM 11950 / CIP 105744 / CCUG 35717).